A 402-amino-acid chain; its full sequence is D-galactonate dehydratase family member EGBG_02030 (402 aa).

Asp207 is a Mg(2+) binding site. A D-arabinonate-binding site is contributed by His209. 2 residues coordinate Mg(2+): Glu233 and Glu259. D-arabinonate-binding residues include Glu259, Arg280, His309, and Glu336.

This sequence belongs to the mandelate racemase/muconate lactonizing enzyme family. GalD subfamily.

Functionally, has no detectable activity with D-mannonate and with a panel of 70 other acid sugars (in vitro), in spite of the conservation of the residues that are expected to be important for catalytic activity and cofactor binding. May have evolved a divergent function. In Enterococcus gallinarum (strain EG2), this protein is D-galactonate dehydratase family member EGBG_02030.